Consider the following 414-residue polypeptide: Serine hydroxymethyltransferase (414 aa).

(6S)-5,6,7,8-tetrahydrofolate-binding positions include Leu121 and 125 to 127 (GHL). Lys229 is modified (N6-(pyridoxal phosphate)lysine).

It belongs to the SHMT family. Homodimer. Pyridoxal 5'-phosphate is required as a cofactor.

The protein localises to the cytoplasm. It carries out the reaction (6R)-5,10-methylene-5,6,7,8-tetrahydrofolate + glycine + H2O = (6S)-5,6,7,8-tetrahydrofolate + L-serine. It functions in the pathway one-carbon metabolism; tetrahydrofolate interconversion. It participates in amino-acid biosynthesis; glycine biosynthesis; glycine from L-serine: step 1/1. Its function is as follows. Catalyzes the reversible interconversion of serine and glycine with tetrahydrofolate (THF) serving as the one-carbon carrier. This reaction serves as the major source of one-carbon groups required for the biosynthesis of purines, thymidylate, methionine, and other important biomolecules. Also exhibits THF-independent aldolase activity toward beta-hydroxyamino acids, producing glycine and aldehydes, via a retro-aldol mechanism. The chain is Serine hydroxymethyltransferase from Polaromonas naphthalenivorans (strain CJ2).